We begin with the raw amino-acid sequence, 79 residues long: uncharacterized protein (79 aa).

Residues 1 to 27 (MRQRGQEHLPTSVKSEPRACNNPTVAE) form a disordered region.

This is an uncharacterized protein from Homo sapiens (Human).